Reading from the N-terminus, the 441-residue chain is Proline--tRNA ligase (441 aa).

This sequence belongs to the class-II aminoacyl-tRNA synthetase family. ProS type 2 subfamily. As to quaternary structure, homodimer.

It is found in the cytoplasm. The catalysed reaction is tRNA(Pro) + L-proline + ATP = L-prolyl-tRNA(Pro) + AMP + diphosphate. Functionally, catalyzes the attachment of proline to tRNA(Pro) in a two-step reaction: proline is first activated by ATP to form Pro-AMP and then transferred to the acceptor end of tRNA(Pro). The sequence is that of Proline--tRNA ligase from Bartonella henselae (strain ATCC 49882 / DSM 28221 / CCUG 30454 / Houston 1) (Rochalimaea henselae).